The chain runs to 277 residues: Thiazole synthase (277 aa).

Lysine 107 (schiff-base intermediate with DXP) is an active-site residue. 1-deoxy-D-xylulose 5-phosphate-binding positions include glycine 168, alanine 194–glycine 195, and alanine 216–serine 217.

It belongs to the ThiG family. In terms of assembly, homotetramer. Forms heterodimers with either ThiH or ThiS.

The protein localises to the cytoplasm. It catalyses the reaction [ThiS sulfur-carrier protein]-C-terminal-Gly-aminoethanethioate + 2-iminoacetate + 1-deoxy-D-xylulose 5-phosphate = [ThiS sulfur-carrier protein]-C-terminal Gly-Gly + 2-[(2R,5Z)-2-carboxy-4-methylthiazol-5(2H)-ylidene]ethyl phosphate + 2 H2O + H(+). It participates in cofactor biosynthesis; thiamine diphosphate biosynthesis. Its function is as follows. Catalyzes the rearrangement of 1-deoxy-D-xylulose 5-phosphate (DXP) to produce the thiazole phosphate moiety of thiamine. Sulfur is provided by the thiocarboxylate moiety of the carrier protein ThiS. In vitro, sulfur can be provided by H(2)S. In Cutibacterium acnes (strain DSM 16379 / KPA171202) (Propionibacterium acnes), this protein is Thiazole synthase.